We begin with the raw amino-acid sequence, 108 residues long: Glutaredoxin-1 (108 aa).

Positions 3–106 constitute a Glutaredoxin domain; it reads EEFVQQRLTN…DILSSIGVLR (104 aa). Cys-23 and Cys-26 are joined by a disulfide.

It belongs to the glutaredoxin family.

It localises to the virion. Displays thioltransferase and dehydroascorbate reductase activities. The polypeptide is Glutaredoxin-1 (OPG075) (Variola virus (isolate Human/India/Ind3/1967) (VARV)).